We begin with the raw amino-acid sequence, 101 residues long: Small ribosomal subunit protein uS14A (101 aa).

It belongs to the universal ribosomal protein uS14 family. Part of the 30S ribosomal subunit. Contacts proteins S3 and S10.

Binds 16S rRNA, required for the assembly of 30S particles and may also be responsible for determining the conformation of the 16S rRNA at the A site. The chain is Small ribosomal subunit protein uS14A from Salinispora arenicola (strain CNS-205).